The chain runs to 93 residues: uncharacterized protein (93 aa).

The helical transmembrane segment at 12–32 (VVGGLSFWTFSAGLIMIVNAL) threads the bilayer. Residues 47-66 (TANANGSDDDNENKNNSYRS) form a disordered region.

The protein localises to the cell membrane. This is an uncharacterized protein from Mycoplasma genitalium (strain ATCC 33530 / DSM 19775 / NCTC 10195 / G37) (Mycoplasmoides genitalium).